The sequence spans 447 residues: Argininosuccinate synthase (447 aa).

Residues 17 to 25 (AFSGGLDTS) and Ala-43 contribute to the ATP site. An L-citrulline-binding site is contributed by Tyr-99. Positions 129 and 131 each coordinate ATP. Positions 131, 135, and 136 each coordinate L-aspartate. L-citrulline is bound at residue Asn-135. Asp-136 contacts ATP. L-citrulline contacts are provided by Arg-139 and Ser-192. Residue Asp-194 coordinates ATP. Residues Thr-201, Glu-203, and Glu-280 each contribute to the L-citrulline site.

It belongs to the argininosuccinate synthase family. Type 2 subfamily. As to quaternary structure, homotetramer.

The protein localises to the cytoplasm. The catalysed reaction is L-citrulline + L-aspartate + ATP = 2-(N(omega)-L-arginino)succinate + AMP + diphosphate + H(+). It participates in amino-acid biosynthesis; L-arginine biosynthesis; L-arginine from L-ornithine and carbamoyl phosphate: step 2/3. This Paracidovorax citrulli (strain AAC00-1) (Acidovorax citrulli) protein is Argininosuccinate synthase.